The following is a 533-amino-acid chain: Calcium uptake protein 1 homolog, mitochondrial (533 aa).

The N-terminal 13 residues, Met1–Arg13, are a transit peptide targeting the mitochondrion. A disordered region spans residues Pro127–Val147. 3 EF-hand domains span residues Thr270–Gln305, Lys337–Asp358, and Leu465–Arg500. Ca(2+) contacts are provided by Asp283, Asp285, Asn287, and Glu294.

This sequence belongs to the MICU1 family. MICU1 subfamily.

The protein resides in the mitochondrion intermembrane space. It is found in the mitochondrion inner membrane. Functionally, calcium sensor of the mitochondrial calcium uniporter (mcu-1) channel, which senses calcium level via its EF-hand domains. At low calcium levels, micu-1 occludes the pore of the mcu-1 channel, preventing mitochondrial calcium uptake. At higher calcium levels, calcium-binding to micu-1 induces a conformational change that weakens mcu-1-micu-1 interactions and moves micu-1 away from the pore, allowing calcium permeation through the mcu-1 channel. Also required to protect against manganese toxicity by preventing manganese uptake by mcu-1. Modulates the activity of the mitochondrial calcium uniporter protein mcu-1 depending on the level of intracellular calcium in PLM touch receptor neurons following axonal injury. This chain is Calcium uptake protein 1 homolog, mitochondrial, found in Caenorhabditis briggsae.